The primary structure comprises 718 residues: Potassium channel KAT1 (718 aa).

Residues 1-60 (MTQAHSKSCFHQFWDGLQIKRSSDSFTVELLPSLGATINHSNKLQKFIISPYDPRYRSWE) lie on the Cytoplasmic side of the membrane. A helical membrane pass occupies residues 61–81 (LFLIVLVVYSAWICPFELAFL). Residues 82–88 (RDLPSKL) are Extracellular-facing. A helical membrane pass occupies residues 89–109 (LLVENIVDIFFAIDIVLTFFV). Residues 110–132 (AYVDSKTHLLVDDRKRIAMRYLS) are Cytoplasmic-facing. The chain crosses the membrane as a helical span at residues 133–153 (TWFIFDVCSTAPFQPIILLFT). The Extracellular segment spans residues 154-162 (HKGNDIAFK). A helical; Voltage-sensor transmembrane segment spans residues 163 to 183 (VLNLLRLWRLHRVSSLFARLE). The Cytoplasmic segment spans residues 184–197 (KDIRFNYFWTRCSK). The chain crosses the membrane as a helical span at residues 198–218 (LISVTLFAVHCAGCFNYMIAD). Topologically, residues 219-245 (RYPNPEKTWIGAVMSTFRSESLWTRYI) are extracellular. The segment at residues 246–265 (TALYWSITTLTTTGYGDLHA) is an intramembrane region (pore-forming). The Extracellular segment spans residues 266–269 (ENPT). The helical transmembrane segment at 270–290 (EMLFDIVYMMFNLGLTAYLIG) threads the bilayer. The Cytoplasmic portion of the chain corresponds to 291 to 718 (NMTNLVVHGT…DGDHLFLLEM (428 aa)). 374-493 (LFNGVSGNFI…NILMNNLVQK (120 aa)) serves as a coordination point for a nucleoside 3',5'-cyclic phosphate. Positions 560–584 (EATRSSASENENSSMTDKEENHDEV) are disordered. Residues 562 to 574 (TRSSASENENSSM) show a composition bias toward polar residues. The span at 575–584 (TDKEENHDEV) shows a compositional bias: basic and acidic residues. In terms of domain architecture, KHA spans 647–718 (RVTIHKYRHN…DGDHLFLLEM (72 aa)).

Belongs to the potassium channel family. Plant (TC 1.A.1.4) subfamily.

The protein resides in the membrane. Functionally, probable inward-rectifying potassium channel. Assuming opened or closed conformations in response to the voltage difference across the membrane, the channel is activated by hyperpolarization. In Oryza sativa subsp. japonica (Rice), this protein is Potassium channel KAT1.